The chain runs to 633 residues: MHPEASEPPVDSAAEPSLEESAGDHGDAGPGVRKEEINETKETCVGPCTTSCQSQQQPSGDNGSDGLFTHSRDDRDDRGPRMTKQFLQKLCKQHKLYVTPALNDTLYLHFKGFDRIENLEEYTGLRCLWLECNGIQRIENLQAQSELRCLFLQVNLLHKIENLEPLQKLDALNLSNNYIKTIENLSCLPVLNTLQMAHNRLETVADIEHLRECLQLCVLDLSHNSLSDPEILSVLETMPCLRVLNLMGNPVTKHIPNYRRTVTVRLKHLTYLDDRPVFPKDRACAEAWARGGYAAEKEERHQWESREHKKITDSLEALAMIKRRAEERKKARDRGETPLPESEKSIPTSPEAQEKPPKGETQQKMESFVKESFEAKDELFPEKPGEGEELSVVVGNRAVEDADLSGNLAHTQTPVVVTPEEVTSPVEATDGARTEDTEAIALETKEKLFIDDLPDLEDVDGTDVSVEDQTKDTGIRKIQAISSLSDDSDLELEELPLSVFEGTPISPTGALSHIFAVSKDPSEAARVPFADICMPTATTDLETQSQDPSTASSHPLIQELGEDELTEGESNQPLPPQSCASDPTLAQSSEGGDSQLPAATPLGDGAENEAQSSLYPEEPSTRIGLEDIEFGLD.

The interval 1–80 is disordered; it reads MHPEASEPPV…SRDDRDDRGP (80 aa). The span at 22-42 shows a compositional bias: basic and acidic residues; the sequence is AGDHGDAGPGVRKEEINETKE. A compositionally biased stretch (low complexity) spans 46 to 60; it reads GPCTTSCQSQQQPSG. Over residues 70-80 the composition is skewed to basic and acidic residues; it reads HSRDDRDDRGP. 6 LRR repeats span residues 101-123, 124-145, 146-167, 168-189, 190-211, and 215-236; these read ALND…EEYT, GLRC…QAQS, ELRC…EPLQ, KLDA…SCLP, VLNT…EHLR, and QLCV…SVLE. Residues 249 to 288 enclose the LRRCT domain; sequence NPVTKHIPNYRRTVTVRLKHLTYLDDRPVFPKDRACAEAW. Positions 326-344 are enriched in basic and acidic residues; the sequence is EERKKARDRGETPLPESEK. 2 disordered regions span residues 326-364 and 404-436; these read EERK…TQQK and LSGN…RTED. S349 carries the phosphoserine modification. Residues 352–364 are compositionally biased toward basic and acidic residues; sequence AQEKPPKGETQQK. Residues 413–427 show a composition bias toward low complexity; that stretch reads TPVVVTPEEVTSPVE. T462 bears the Phosphothreonine mark. Phosphoserine occurs at positions 465 and 488. Polar residues-rich tracts occupy residues 538–555 and 568–592; these read TTDL…SSHP and GESN…SEGG. The interval 538–633 is disordered; the sequence is TTDLETQSQD…GLEDIEFGLD (96 aa).

The protein belongs to the DNAAF1 family.

It is found in the cell projection. The protein resides in the cilium. In terms of biological role, cilium-specific protein required for the stability of the ciliary architecture. Plays a role in cytoplasmic preassembly of dynein arms. Involved in regulation of microtubule-based cilia and actin-based brush border microvilli. The protein is Dynein axonemal assembly factor 1 (Dnaaf1) of Rattus norvegicus (Rat).